The sequence spans 44 residues: MSYKCSRCKRDVELDEYGGVRCPYCGHRVLLKERSRDIKEVEVE.

The Zn(2+) site is built by Cys8, Cys22, and Cys25.

This sequence belongs to the archaeal Rpo12/eukaryotic RPC10 RNA polymerase subunit family. As to quaternary structure, part of the RNA polymerase complex. Requires Zn(2+) as cofactor.

The protein localises to the cytoplasm. The catalysed reaction is RNA(n) + a ribonucleoside 5'-triphosphate = RNA(n+1) + diphosphate. DNA-dependent RNA polymerase (RNAP) catalyzes the transcription of DNA into RNA using the four ribonucleoside triphosphates as substrates. The polypeptide is DNA-directed RNA polymerase subunit Rpo12 (Natronomonas pharaonis (strain ATCC 35678 / DSM 2160 / CIP 103997 / JCM 8858 / NBRC 14720 / NCIMB 2260 / Gabara) (Halobacterium pharaonis)).